Here is a 124-residue protein sequence, read N- to C-terminus: uncharacterized protein (124 aa).

Positions Met-1–Ser-19 are cleaved as a signal peptide. A run of 2 helical transmembrane segments spans residues Ile-37 to Phe-57 and Leu-86 to Ile-108.

Its subcellular location is the membrane. This is an uncharacterized protein from Saccharomyces cerevisiae (strain ATCC 204508 / S288c) (Baker's yeast).